The sequence spans 371 residues: DNA replication and repair protein RecF (371 aa).

30 to 37 lines the ATP pocket; the sequence is GPNAQGKT.

It belongs to the RecF family.

It is found in the cytoplasm. In terms of biological role, the RecF protein is involved in DNA metabolism; it is required for DNA replication and normal SOS inducibility. RecF binds preferentially to single-stranded, linear DNA. It also seems to bind ATP. This Desulforamulus reducens (strain ATCC BAA-1160 / DSM 100696 / MI-1) (Desulfotomaculum reducens) protein is DNA replication and repair protein RecF.